Reading from the N-terminus, the 132-residue chain is Small ribosomal subunit protein uS8 (132 aa).

The protein belongs to the universal ribosomal protein uS8 family. In terms of assembly, part of the 30S ribosomal subunit. Contacts proteins S5 and S12.

Functionally, one of the primary rRNA binding proteins, it binds directly to 16S rRNA central domain where it helps coordinate assembly of the platform of the 30S subunit. This Streptococcus gordonii (strain Challis / ATCC 35105 / BCRC 15272 / CH1 / DL1 / V288) protein is Small ribosomal subunit protein uS8.